The following is a 126-amino-acid chain: MADMKWAVAHIKSSFNNTIITVTDITGAETIAKSSGGMVVKAARDESSPYTAMQMAGQLADQLRDKGIHGIHIRVRAPGGNKQRSPGPGAQAAIRAFARAGIRIGRIEDVTPVPHDGTRPKGGRRV.

It belongs to the universal ribosomal protein uS11 family. In terms of assembly, part of the 30S ribosomal subunit.

Its function is as follows. Located on the platform of the 30S subunit. This Methanosarcina barkeri (strain Fusaro / DSM 804) protein is Small ribosomal subunit protein uS11.